The chain runs to 1066 residues: Hemoglobin and hemoglobin-haptoglobin-binding protein C (1066 aa).

Residues 1-24 (MTNFKFTLLARSIAFALNASTAYA) form the signal peptide. Tandem repeats lie at residues 26–29 (QPTN), 30–33 (QPTN), 34–37 (QPTN), 38–41 (QPTN), 42–45 (QPTN), 46–49 (QPTN), and 50–53 (QPTN). Positions 26-53 (QPTNQPTNQPTNQPTNQPTNQPTNQPTN) are 7 X 4 AA tandem repeats of Q-P-T-N. Over residues 26–54 (QPTNQPTNQPTNQPTNQPTNQPTNQPTNQ) the composition is skewed to low complexity. The segment at 26 to 57 (QPTNQPTNQPTNQPTNQPTNQPTNQPTNQDSN) is disordered. The TonB box motif lies at 63–70 (EQINVSGS). In terms of domain architecture, TBDR plug spans 66-200 (NVSGSTETIN…LGGSVIFETK (135 aa)). In terms of domain architecture, TBDR beta-barrel spans 208-1066 (DKDYYVSYKR…NYRMSVQFEF (859 aa)). The short motif at 1049–1066 (NRLYAPGRNYRMSVQFEF) is the TonB C-terminal box element.

This sequence belongs to the TonB-dependent receptor family. Hemoglobin/haptoglobin binding protein subfamily.

Its subcellular location is the cell outer membrane. Functionally, acts as a receptor for hemoglobin or the hemoglobin/haptoglobin complex of the human host and is required for heme uptake. The chain is Hemoglobin and hemoglobin-haptoglobin-binding protein C (hgpC) from Haemophilus influenzae.